Here is a 358-residue protein sequence, read N- to C-terminus: Peptide chain release factor 1 (358 aa).

Residue Q236 is modified to N5-methylglutamine.

Belongs to the prokaryotic/mitochondrial release factor family. In terms of processing, methylated by PrmC. Methylation increases the termination efficiency of RF1.

It is found in the cytoplasm. Functionally, peptide chain release factor 1 directs the termination of translation in response to the peptide chain termination codons UAG and UAA. In Corynebacterium aurimucosum (strain ATCC 700975 / DSM 44827 / CIP 107346 / CN-1) (Corynebacterium nigricans), this protein is Peptide chain release factor 1.